Here is a 394-residue protein sequence, read N- to C-terminus: NAD(P)H-quinone oxidoreductase subunit H (394 aa).

It belongs to the complex I 49 kDa subunit family. NDH-1 can be composed of about 15 different subunits; different subcomplexes with different compositions have been identified which probably have different functions.

It localises to the cellular thylakoid membrane. It carries out the reaction a plastoquinone + NADH + (n+1) H(+)(in) = a plastoquinol + NAD(+) + n H(+)(out). The catalysed reaction is a plastoquinone + NADPH + (n+1) H(+)(in) = a plastoquinol + NADP(+) + n H(+)(out). In terms of biological role, NDH-1 shuttles electrons from an unknown electron donor, via FMN and iron-sulfur (Fe-S) centers, to quinones in the respiratory and/or the photosynthetic chain. The immediate electron acceptor for the enzyme in this species is believed to be plastoquinone. Couples the redox reaction to proton translocation, and thus conserves the redox energy in a proton gradient. Cyanobacterial NDH-1 also plays a role in inorganic carbon-concentration. The protein is NAD(P)H-quinone oxidoreductase subunit H of Synechococcus sp. (strain RCC307).